The primary structure comprises 172 residues: Shikimate kinase (172 aa).

ATP is bound at residue glycine 14 to threonine 19. Serine 18 provides a ligand contact to Mg(2+). Residues aspartate 36, arginine 60, and glycine 82 each contribute to the substrate site. Arginine 120 lines the ATP pocket. Arginine 139 is a binding site for substrate. Glutamine 156 contacts ATP.

Belongs to the shikimate kinase family. Monomer. Requires Mg(2+) as cofactor.

It localises to the cytoplasm. The enzyme catalyses shikimate + ATP = 3-phosphoshikimate + ADP + H(+). Its pathway is metabolic intermediate biosynthesis; chorismate biosynthesis; chorismate from D-erythrose 4-phosphate and phosphoenolpyruvate: step 5/7. Functionally, catalyzes the specific phosphorylation of the 3-hydroxyl group of shikimic acid using ATP as a cosubstrate. This is Shikimate kinase from Vibrio parahaemolyticus serotype O3:K6 (strain RIMD 2210633).